The sequence spans 297 residues: tRNA pseudouridine synthase B (297 aa).

Catalysis depends on Asp-44, which acts as the Nucleophile.

Belongs to the pseudouridine synthase TruB family. Type 1 subfamily.

It catalyses the reaction uridine(55) in tRNA = pseudouridine(55) in tRNA. Responsible for synthesis of pseudouridine from uracil-55 in the psi GC loop of transfer RNAs. This is tRNA pseudouridine synthase B from Mycobacterium sp. (strain JLS).